Consider the following 458-residue polypeptide: UDP-N-acetylmuramate--L-alanine ligase (458 aa).

G118–T124 is a binding site for ATP.

It belongs to the MurCDEF family.

The protein resides in the cytoplasm. The catalysed reaction is UDP-N-acetyl-alpha-D-muramate + L-alanine + ATP = UDP-N-acetyl-alpha-D-muramoyl-L-alanine + ADP + phosphate + H(+). It functions in the pathway cell wall biogenesis; peptidoglycan biosynthesis. Cell wall formation. In Clostridium botulinum (strain Langeland / NCTC 10281 / Type F), this protein is UDP-N-acetylmuramate--L-alanine ligase.